Consider the following 373-residue polypeptide: Phosphoserine aminotransferase (373 aa).

Arg-46 is an L-glutamate binding site. Phe-104, Thr-150, Asp-172, and Gln-195 together coordinate pyridoxal 5'-phosphate. The residue at position 196 (Lys-196) is an N6-(pyridoxal phosphate)lysine. Asn-247 to Thr-248 serves as a coordination point for pyridoxal 5'-phosphate.

The protein belongs to the class-V pyridoxal-phosphate-dependent aminotransferase family. SerC subfamily. Homodimer. The cofactor is pyridoxal 5'-phosphate.

The protein localises to the cytoplasm. The enzyme catalyses O-phospho-L-serine + 2-oxoglutarate = 3-phosphooxypyruvate + L-glutamate. It catalyses the reaction 4-(phosphooxy)-L-threonine + 2-oxoglutarate = (R)-3-hydroxy-2-oxo-4-phosphooxybutanoate + L-glutamate. The protein operates within amino-acid biosynthesis; L-serine biosynthesis; L-serine from 3-phospho-D-glycerate: step 2/3. It participates in cofactor biosynthesis; pyridoxine 5'-phosphate biosynthesis; pyridoxine 5'-phosphate from D-erythrose 4-phosphate: step 3/5. Catalyzes the reversible conversion of 3-phosphohydroxypyruvate to phosphoserine and of 3-hydroxy-2-oxo-4-phosphonooxybutanoate to phosphohydroxythreonine. The sequence is that of Phosphoserine aminotransferase from Rhodococcus opacus (strain B4).